The chain runs to 1709 residues: Sialoadhesin (1709 aa).

The signal sequence occupies residues 1–19 (MGFLPKLLLLASFFPAGQA). Residues 20-136 (SWGVSSPQDV…DVKGTLVTVT (117 aa)) enclose the Ig-like V-type domain. Residues 20 to 1641 (SWGVSSPQDV…ALHRLHQFQQ (1622 aa)) are Extracellular-facing. Disulfide bonds link cysteine 36-cysteine 166, cysteine 41-cysteine 98, cysteine 160-cysteine 217, and cysteine 262-cysteine 305. N-acetylneuraminate contacts are provided by residues tyrosine 63, arginine 116, and 122–126 (VNRWS). 12 Ig-like C2-type domains span residues 139 to 233 (PRVP…IHLQ), 238 to 320 (PKGV…PPIS), 326 to 405 (AEVQ…GPVS), 411 to 507 (PPLT…LDFH), 511 to 593 (ARLL…AVLT), 601 to 705 (PTFT…ATFN), 708 to 785 (ATVL…AQLS), 799 to 894 (PKLS…FQVR), 898 to 977 (VQVS…APIS), 984 to 1083 (PRHV…ADFD), 1085 to 1165 (QAVN…RPIT), and 1176 to 1248 (RLTY…SPLG). A glycan (N-linked (GlcNAc...) asparagine) is linked at asparagine 159. N-linked (GlcNAc...) asparagine glycosylation is found at asparagine 265 and asparagine 339. 2 cysteine pairs are disulfide-bonded: cysteine 346-cysteine 390 and cysteine 433-cysteine 491. An N-linked (GlcNAc...) asparagine glycan is attached at asparagine 499. 2 cysteine pairs are disulfide-bonded: cysteine 531-cysteine 575 and cysteine 624-cysteine 689. Asparagine 697, asparagine 726, asparagine 730, and asparagine 741 each carry an N-linked (GlcNAc...) asparagine glycan. 2 cysteine pairs are disulfide-bonded: cysteine 729/cysteine 774 and cysteine 817/cysteine 876. Asparagine 886 is a glycosylation site (N-linked (GlcNAc...) asparagine). Disulfide bonds link cysteine 916–cysteine 960 and cysteine 1005–cysteine 1067. Asparagine 1104 and asparagine 1138 each carry an N-linked (GlcNAc...) asparagine glycan. 2 disulfides stabilise this stretch: cysteine 1107/cysteine 1149 and cysteine 1193/cysteine 1241. Asparagine 1251 is a glycosylation site (N-linked (GlcNAc...) asparagine). 4 consecutive Ig-like C2-type domains span residues 1259 to 1341 (EGVR…AALQ), 1350 to 1442 (VLSS…RLQV), 1445 to 1528 (ARVV…VMLR), and 1536 to 1631 (PTMM…FGVR). Disulfide bonds link cysteine 1281/cysteine 1324 and cysteine 1367/cysteine 1425. 2 N-linked (GlcNAc...) asparagine glycosylation sites follow: asparagine 1462 and asparagine 1476. Cystine bridges form between cysteine 1465–cysteine 1511 and cysteine 1554–cysteine 1613. The chain crosses the membrane as a helical span at residues 1642–1662 (LLWVLGLLVGLLLLLLGLGAC). Residues 1663–1709 (YTWRRRRVCKQSMGENSVEMAFQKETTQLIDPDAATCETSTCAPPLG) lie on the Cytoplasmic side of the membrane.

It belongs to the immunoglobulin superfamily. SIGLEC (sialic acid binding Ig-like lectin) family. Interacts with TYROBP. Interacts with CLEC10A. As to expression, expressed by macrophages in various tissues. High levels are found in spleen, lymph node, perivascular macrophages in brain and lower levels in bone marrow, liver Kupffer cells and lamina propria of colon and lung. Also expressed by inflammatory macrophages in rheumatoid arthritis.

The protein localises to the cell membrane. It is found in the secreted. Functionally, macrophage-restricted adhesion molecule that mediates sialic-acid dependent binding to lymphocytes, including granulocytes, monocytes, natural killer cells, B-cells and CD8 T-cells. Plays a crucial role in limiting bacterial dissemination by engaging sialylated bacteria to promote effective phagocytosis and antigen presentation for the adaptive immune response. Mediates the uptake of various enveloped viruses via sialic acid recognition and subsequently induces the formation of intracellular compartments filled with virions (VCCs). In turn, enhances macrophage-to-T-cell transmission of several viruses including HIV-1 or SARS-CoV-2. Acts as an endocytic receptor mediating clathrin dependent endocytosis. Preferentially binds to alpha-2,3-linked sialic acid. Binds to SPN/CD43 on T-cells. May play a role in hemopoiesis. Plays a role in the inhibition of antiviral innate immune by promoting TBK1 degradation via TYROBP and TRIM27-mediated ubiquitination. (Microbial infection) Facilitates viral cytoplasmic entry into activated dendritic cells via recognition of sialylated gangliosides pesent on viral membrane. The sequence is that of Sialoadhesin (SIGLEC1) from Homo sapiens (Human).